We begin with the raw amino-acid sequence, 40 residues long: Large ribosomal subunit protein bL33c (40 aa).

This sequence belongs to the bacterial ribosomal protein bL33 family.

It localises to the plastid. The protein localises to the chloroplast. This Pisum sativum (Garden pea) protein is Large ribosomal subunit protein bL33c (rpl33).